Here is a 378-residue protein sequence, read N- to C-terminus: Chaperone protein DnaJ (378 aa).

Residues 5–70 enclose the J domain; sequence DYYEVLGVGR…NKKAAYDQFG (66 aa). Residues 134–212 form a CR-type zinc finger; the sequence is GLTKELRIPT…CHGDGRVEKT (79 aa). Residues Cys147, Cys150, Cys164, Cys167, Cys186, Cys189, Cys200, and Cys203 each coordinate Zn(2+). 4 CXXCXGXG motif repeats span residues 147–154, 164–171, 186–193, and 200–207; these read CDVCDGSG, CTTCHGQG, CPTCHGRG, and CAKCHGDG.

Belongs to the DnaJ family. Homodimer. The cofactor is Zn(2+).

The protein localises to the cytoplasm. In terms of biological role, participates actively in the response to hyperosmotic and heat shock by preventing the aggregation of stress-denatured proteins and by disaggregating proteins, also in an autonomous, DnaK-independent fashion. Unfolded proteins bind initially to DnaJ; upon interaction with the DnaJ-bound protein, DnaK hydrolyzes its bound ATP, resulting in the formation of a stable complex. GrpE releases ADP from DnaK; ATP binding to DnaK triggers the release of the substrate protein, thus completing the reaction cycle. Several rounds of ATP-dependent interactions between DnaJ, DnaK and GrpE are required for fully efficient folding. Also involved, together with DnaK and GrpE, in the DNA replication of plasmids through activation of initiation proteins. The sequence is that of Chaperone protein DnaJ from Shewanella oneidensis (strain ATCC 700550 / JCM 31522 / CIP 106686 / LMG 19005 / NCIMB 14063 / MR-1).